The primary structure comprises 800 residues: Internalin A (800 aa).

An N-terminal signal peptide occupies residues 1 to 35 (MRKKRYVWLKSILVAILVFGSGVWINTSNGTNAQA). Residues 36–76 (ATITQDTPINQIFTDTALAEKMKTVLGKTNVTDTVSQTDLD) form the LRRNT domain. LRR repeat units follow at residues 77–98 (QVTTLQADRLGIKSIDGVEYLN), 99–120 (NLTQINFSNNQLTDITPLKNLT), 121–142 (KLVDILMNNNQIADITPLANLT), 143–164 (NLTGLTLFNNQITDIDPLKNLT), 165–186 (NLNRLELSSNTISDISALSGLT), 187–207 (SLQQLSFGNQVTDLKPLANLT), 208–229 (TLERLDISSNKVSDISVLAKLT), 230–251 (NLESLIATNNQISDITPLGILT), 252–273 (NLDELSLNGNQLKDIGTLASLT), 274–295 (NLTDLDLANNQISNLAPLSGLT), 296–317 (KLTELKLGANQISNISPLAGLT), 318–339 (ALTNLELNENQLEDISPISNLK), 340–361 (NLTYLTLYFNNISDISPVSSLT), 362–383 (KLQRLFFYNNKVSDVSSLANLT), and 384–405 (NINWLSAGHNQISDLTPLANLT). One can recognise an LRRCT domain in the interval 416–505 (AWTNAPVNYK…AIFNVKFHVD (90 aa)). A B-1 repeat occupies 518 to 587 (LLTEPAKPVK…TTSQTVDYQG (70 aa)). Residues 518–706 (LLTEPAKPVK…ITLYAQFTKN (189 aa)) form a 3 X approximate tandem repeats, type B region. One copy of the B-2 repeat lies at 588–657 (LLQEPTAPTK…STTQAVDYQG (70 aa)). The B-3 repeat unit spans residues 658 to 706 (LLKEPKAPTKAGYTFKGWYDEKTDGKKWDFATDKMPANDITLYAQFTKN). Residues 705–757 (KNPVAPPTTGGNTPPTTNNGGNTTPPSANIPGSDTSNTSTGNSASTTSTMNAY) are disordered. Residues 711-753 (PTTGGNTPPTTNNGGNTTPPSANIPGSDTSNTSTGNSASTTST) show a composition bias toward low complexity. The LPXTG sorting signal motif lies at 767 to 771 (LPTTG). A Pentaglycyl murein peptidoglycan amidated threonine modification is found at T770. Residues 771–800 (GDSDNALYLLLGLLAVGTAMALTKKARASK) constitute a propeptide, removed by sortase A.

It belongs to the internalin family. In terms of assembly, interacts with host (human) cadherin-1 (CDH1). The formation of the complex between inlA and cadherin-1 is calcium-dependent. Mutagenesis studies show it is possible to increase the affinity of InlA for CDH1 by rational engineering of InlA residues.

Its subcellular location is the secreted. The protein localises to the cell wall. Its activity is regulated as follows. Bacterial uptake is inhibited by EDTA and by anti-E-cadherin antibodies. In terms of biological role, mediates the entry of L.monocytogenes into host intestinal epithelial cells; transformation with inlA alone allows L.innocua (a non-invasive species) to be taken up by host cells. Binds to human receptor cadherin-1 (E-cadherin, CDH1); the chicken homolog of cadherin-1 but not cadherin-2 function as receptors. Mouse cadherin-1 is not a receptor, however mutating a single surface-exposed residue (Glu-172 to Pro in mouse) allows cadherin-1 to act as a receptor for InlA. The protein is Internalin A of Listeria monocytogenes serovar 1/2a (strain ATCC BAA-679 / EGD-e).